Here is a 283-residue protein sequence, read N- to C-terminus: 2-dehydro-3-deoxyphosphooctonate aldolase (283 aa).

The protein belongs to the KdsA family.

It localises to the cytoplasm. It carries out the reaction D-arabinose 5-phosphate + phosphoenolpyruvate + H2O = 3-deoxy-alpha-D-manno-2-octulosonate-8-phosphate + phosphate. It functions in the pathway carbohydrate biosynthesis; 3-deoxy-D-manno-octulosonate biosynthesis; 3-deoxy-D-manno-octulosonate from D-ribulose 5-phosphate: step 2/3. It participates in bacterial outer membrane biogenesis; lipopolysaccharide biosynthesis. The protein is 2-dehydro-3-deoxyphosphooctonate aldolase of Vibrio cholerae serotype O1 (strain ATCC 39315 / El Tor Inaba N16961).